A 538-amino-acid polypeptide reads, in one-letter code: Diacylglycerol O-acyltransferase 1-1 (538 aa).

Disordered regions lie at residues Met1–Val39 and Ala54–Arg106. Residues Glu69–Pro83 show a composition bias toward low complexity. 7 helical membrane passes run Ala136–Val156, Trp186–Glu206, Val218–Ile238, Val245–Phe265, Asn293–Tyr313, Gly326–Ile346, and Leu382–Leu402. Residues Phe409–Asn415 carry the FYXDWWN motif motif. The next 3 helical transmembrane spans lie at Val451–Pro471, Ile474–Ala494, and Val505–Leu525. His464 is an active-site residue.

The protein belongs to the membrane-bound acyltransferase family. Sterol o-acyltransferase subfamily.

It is found in the endoplasmic reticulum membrane. The catalysed reaction is an acyl-CoA + a 1,2-diacyl-sn-glycerol = a triacyl-sn-glycerol + CoA. The protein operates within glycerolipid metabolism; triacylglycerol biosynthesis. Functionally, involved in triacylglycerol (TAG) synthesis. Catalyzes the acylation of the sn-3 hydroxy group of sn-1,2-diacylglycerol using acyl-CoA. The chain is Diacylglycerol O-acyltransferase 1-1 from Oryza sativa subsp. japonica (Rice).